Here is a 430-residue protein sequence, read N- to C-terminus: Asparagine--tRNA ligase (430 aa).

This sequence belongs to the class-II aminoacyl-tRNA synthetase family. Homodimer.

The protein localises to the cytoplasm. The enzyme catalyses tRNA(Asn) + L-asparagine + ATP = L-asparaginyl-tRNA(Asn) + AMP + diphosphate + H(+). In Listeria monocytogenes serotype 4b (strain F2365), this protein is Asparagine--tRNA ligase.